Consider the following 478-residue polypeptide: MEKPAELVLIPSPGIGHLVSTLEIAKLLVSRDDKLFITVLIMHFPAVSKGTDAYVQSLADSSSPISQRINFINLPHTNMDHTEGSVRNSLVGFVESQQPHVKDAVANLRDSKTTRLAGFVVDMFCTTMINVANQLGVPSYVFFTSGAATLGLLFHLQELRDQYNKDCTEFKDSDAELIIPSFFNPLPAKVLPGRMLVKDSAEPFLNVIKRFRETKGILVNTFTDLESHALHALSSDAEIPPVYPVGPLLNLNSNESRVDSDEVKKKNDILKWLDDQPPLSVVFLCFGSMGSFDESQVREIANALEHAGHRFLWSLRRSPPTGKVAFPSDYDDHTGVLPEGFLDRTGGIGKVIGWAPQVAVLAHPSVGGFVSHCGWNSTLESLWHGVPVATWPLYAEQQLNAFQPVKELELAVEIDMSYRSKSPVLVSAKEIERGIREVMELDSSDIRKRVKEMSEKGKKALMDGGSSYTSLGHFIDQI.

It belongs to the UDP-glycosyltransferase family.

The chain is Putative UDP-glucose flavonoid 3-O-glucosyltransferase 3 from Fragaria ananassa (Strawberry).